The chain runs to 230 residues: Extracellular deoxyribonuclease (230 aa).

A signal peptide spans 1-20 (MFRPLLSLCLALLVSAPAHA).

Belongs to the EndA/NucM nuclease family.

It is found in the secreted. This Aeromonas hydrophila protein is Extracellular deoxyribonuclease (dns).